The chain runs to 344 residues: MKVIKTAPLIPSEIKVLEKEGNRIKISLAPFEFGYAVTLAHPIRRLLLLSSVGYAPVGLKIEGVHHEFDSLRGVTEDVSLFIMNLKNIRFIAKALVGQDSPLENQSVVVDYSFKGPMELRARDLNSEHIEIINPEMLLATINEDAQLNFSLIIYKGMGYVPSEITRELMPEGYMPLDGSFTPIKNVVYEIENVLVEGDPNYEKIIFDIETDGQIDPYKAFLSAVKVMSKQLGVFGEKPIANTEYSGDYAQRDDAKDLSAKIESMNLSARCFNCLDKIGIKYVGELVLMSEEELKGVKNMGKKSYDEIAEKLNDLGYPVGTELSLEQRESLKKRLEKLEDKGGND.

Residues 1–238 (MKVIKTAPLI…KQLGVFGEKP (238 aa)) are alpha N-terminal domain (alpha-NTD). Residues 253–344 (DAKDLSAKIE…EKLEDKGGND (92 aa)) form an alpha C-terminal domain (alpha-CTD) region.

It belongs to the RNA polymerase alpha chain family. Homodimer. The RNAP catalytic core consists of 2 alpha, 1 beta, 1 beta' and 1 omega subunit. When a sigma factor is associated with the core the holoenzyme is formed, which can initiate transcription.

The enzyme catalyses RNA(n) + a ribonucleoside 5'-triphosphate = RNA(n+1) + diphosphate. Functionally, DNA-dependent RNA polymerase catalyzes the transcription of DNA into RNA using the four ribonucleoside triphosphates as substrates. The chain is DNA-directed RNA polymerase subunit alpha from Helicobacter acinonychis (strain Sheeba).